The primary structure comprises 352 residues: Peptide chain release factor 1 (352 aa).

An N5-methylglutamine modification is found at Gln-229.

Belongs to the prokaryotic/mitochondrial release factor family. Post-translationally, methylated by PrmC. Methylation increases the termination efficiency of RF1.

It is found in the cytoplasm. Peptide chain release factor 1 directs the termination of translation in response to the peptide chain termination codons UAG and UAA. The protein is Peptide chain release factor 1 of Acidiphilium cryptum (strain JF-5).